Here is a 333-residue protein sequence, read N- to C-terminus: Ketol-acid reductoisomerase (NADP(+)) (333 aa).

Residues 2-182 form the KARI N-terminal Rossmann domain; that stretch reads AKMYYDSDAS…GCTRAGVLET (181 aa). Residues 25–28, arginine 48, serine 51, and 83–86 each bind NADP(+); these read YGSQ and DERQ. The active site involves histidine 108. Glycine 134 serves as a coordination point for NADP(+). One can recognise a KARI C-terminal knotted domain in the interval 183-328; it reads TFKEETETDL…AELRAMMPFI (146 aa). Mg(2+) is bound by residues aspartate 191, glutamate 195, glutamate 227, and glutamate 231. Serine 252 is a substrate binding site.

This sequence belongs to the ketol-acid reductoisomerase family. The cofactor is Mg(2+).

The enzyme catalyses (2R)-2,3-dihydroxy-3-methylbutanoate + NADP(+) = (2S)-2-acetolactate + NADPH + H(+). It catalyses the reaction (2R,3R)-2,3-dihydroxy-3-methylpentanoate + NADP(+) = (S)-2-ethyl-2-hydroxy-3-oxobutanoate + NADPH + H(+). It participates in amino-acid biosynthesis; L-isoleucine biosynthesis; L-isoleucine from 2-oxobutanoate: step 2/4. It functions in the pathway amino-acid biosynthesis; L-valine biosynthesis; L-valine from pyruvate: step 2/4. Involved in the biosynthesis of branched-chain amino acids (BCAA). Catalyzes an alkyl-migration followed by a ketol-acid reduction of (S)-2-acetolactate (S2AL) to yield (R)-2,3-dihydroxy-isovalerate. In the isomerase reaction, S2AL is rearranged via a Mg-dependent methyl migration to produce 3-hydroxy-3-methyl-2-ketobutyrate (HMKB). In the reductase reaction, this 2-ketoacid undergoes a metal-dependent reduction by NADPH to yield (R)-2,3-dihydroxy-isovalerate. The protein is Ketol-acid reductoisomerase (NADP(+)) of Desulfitobacterium hafniense (strain DSM 10664 / DCB-2).